Consider the following 199-residue polypeptide: Dephospho-CoA kinase (199 aa).

The region spanning 3 to 199 (KVGLTGGICS…DLLEFFTLYQ (197 aa)) is the DPCK domain. 11 to 16 (CSGKST) contacts ATP.

This sequence belongs to the CoaE family.

It localises to the cytoplasm. The catalysed reaction is 3'-dephospho-CoA + ATP = ADP + CoA + H(+). It participates in cofactor biosynthesis; coenzyme A biosynthesis; CoA from (R)-pantothenate: step 5/5. In terms of biological role, catalyzes the phosphorylation of the 3'-hydroxyl group of dephosphocoenzyme A to form coenzyme A. This is Dephospho-CoA kinase from Clostridium perfringens (strain 13 / Type A).